A 371-amino-acid polypeptide reads, in one-letter code: uncharacterized protein (371 aa).

The protein to E.coli YcjY.

This is an uncharacterized protein from Pseudomonas aeruginosa (strain ATCC 15692 / DSM 22644 / CIP 104116 / JCM 14847 / LMG 12228 / 1C / PRS 101 / PAO1).